A 437-amino-acid chain; its full sequence is Phosphoglucosamine mutase (437 aa).

S93 (phosphoserine intermediate) is an active-site residue. Mg(2+) contacts are provided by S93, D230, D232, and D234. S93 is modified (phosphoserine).

It belongs to the phosphohexose mutase family. The cofactor is Mg(2+). Activated by phosphorylation.

The enzyme catalyses alpha-D-glucosamine 1-phosphate = D-glucosamine 6-phosphate. Functionally, catalyzes the conversion of glucosamine-6-phosphate to glucosamine-1-phosphate. The chain is Phosphoglucosamine mutase from Clavibacter michiganensis subsp. michiganensis (strain NCPPB 382).